The chain runs to 739 residues: Phosphoribosylformylglycinamidine synthase subunit PurL (739 aa).

Residue His52 is part of the active site. The ATP site is built by Tyr55 and Lys94. Glu96 contributes to the Mg(2+) binding site. Substrate-binding positions include 97 to 100 and Arg119; that span reads SHNH. His98 (proton acceptor) is an active-site residue. Asp120 contacts Mg(2+). Gln243 is a substrate binding site. Asp271 contacts Mg(2+). 315 to 317 provides a ligand contact to substrate; that stretch reads ESQ. 2 residues coordinate ATP: Asp498 and Gly535. Asn536 contacts Mg(2+). Ser538 contacts substrate.

It belongs to the FGAMS family. Monomer. Part of the FGAM synthase complex composed of 1 PurL, 1 PurQ and 2 PurS subunits.

Its subcellular location is the cytoplasm. It carries out the reaction N(2)-formyl-N(1)-(5-phospho-beta-D-ribosyl)glycinamide + L-glutamine + ATP + H2O = 2-formamido-N(1)-(5-O-phospho-beta-D-ribosyl)acetamidine + L-glutamate + ADP + phosphate + H(+). It participates in purine metabolism; IMP biosynthesis via de novo pathway; 5-amino-1-(5-phospho-D-ribosyl)imidazole from N(2)-formyl-N(1)-(5-phospho-D-ribosyl)glycinamide: step 1/2. Its function is as follows. Part of the phosphoribosylformylglycinamidine synthase complex involved in the purines biosynthetic pathway. Catalyzes the ATP-dependent conversion of formylglycinamide ribonucleotide (FGAR) and glutamine to yield formylglycinamidine ribonucleotide (FGAM) and glutamate. The FGAM synthase complex is composed of three subunits. PurQ produces an ammonia molecule by converting glutamine to glutamate. PurL transfers the ammonia molecule to FGAR to form FGAM in an ATP-dependent manner. PurS interacts with PurQ and PurL and is thought to assist in the transfer of the ammonia molecule from PurQ to PurL. The chain is Phosphoribosylformylglycinamidine synthase subunit PurL from Caulobacter vibrioides (strain ATCC 19089 / CIP 103742 / CB 15) (Caulobacter crescentus).